Here is a 361-residue protein sequence, read N- to C-terminus: Phosphoserine aminotransferase (361 aa).

Positions 9 and 42 each coordinate L-glutamate. Pyridoxal 5'-phosphate-binding positions include 76-77 (GR), W102, T153, D173, and Q196. K197 bears the N6-(pyridoxal phosphate)lysine mark. 238–239 (NT) contacts pyridoxal 5'-phosphate.

It belongs to the class-V pyridoxal-phosphate-dependent aminotransferase family. SerC subfamily. In terms of assembly, homodimer. It depends on pyridoxal 5'-phosphate as a cofactor.

The protein resides in the cytoplasm. It carries out the reaction O-phospho-L-serine + 2-oxoglutarate = 3-phosphooxypyruvate + L-glutamate. It catalyses the reaction 4-(phosphooxy)-L-threonine + 2-oxoglutarate = (R)-3-hydroxy-2-oxo-4-phosphooxybutanoate + L-glutamate. The protein operates within amino-acid biosynthesis; L-serine biosynthesis; L-serine from 3-phospho-D-glycerate: step 2/3. Its pathway is cofactor biosynthesis; pyridoxine 5'-phosphate biosynthesis; pyridoxine 5'-phosphate from D-erythrose 4-phosphate: step 3/5. Functionally, catalyzes the reversible conversion of 3-phosphohydroxypyruvate to phosphoserine and of 3-hydroxy-2-oxo-4-phosphonooxybutanoate to phosphohydroxythreonine. This Cronobacter sakazakii (strain ATCC BAA-894) (Enterobacter sakazakii) protein is Phosphoserine aminotransferase.